The following is a 565-amino-acid chain: NAD-dependent malic enzyme (565 aa).

Tyrosine 104 functions as the Proton donor in the catalytic mechanism. Arginine 157 lines the NAD(+) pocket. The active-site Proton acceptor is the lysine 175. A divalent metal cation-binding residues include glutamate 246, aspartate 247, and aspartate 270. The NAD(+) site is built by aspartate 270 and asparagine 418.

It belongs to the malic enzymes family. As to quaternary structure, homotetramer. It depends on Mg(2+) as a cofactor. Mn(2+) serves as cofactor.

The enzyme catalyses (S)-malate + NAD(+) = pyruvate + CO2 + NADH. The catalysed reaction is oxaloacetate + H(+) = pyruvate + CO2. In Pectobacterium carotovorum subsp. carotovorum (strain PC1), this protein is NAD-dependent malic enzyme.